The primary structure comprises 236 residues: Small ribosomal subunit protein uS2c (236 aa).

This sequence belongs to the universal ribosomal protein uS2 family.

Its subcellular location is the plastid. It localises to the chloroplast. The sequence is that of Small ribosomal subunit protein uS2c (rps2) from Ipomoea purpurea (Common morning glory).